The chain runs to 112 residues: Large ribosomal subunit protein bL17 (112 aa).

This sequence belongs to the bacterial ribosomal protein bL17 family. Part of the 50S ribosomal subunit. Contacts protein L32.

This is Large ribosomal subunit protein bL17 from Carboxydothermus hydrogenoformans (strain ATCC BAA-161 / DSM 6008 / Z-2901).